The following is a 105-amino-acid chain: NADH-quinone oxidoreductase subunit K (105 aa).

3 helical membrane-spanning segments follow: residues 9–29 (PNYY…GVLV), 34–54 (IVLF…LVTF), and 65–85 (IMAF…LAII).

It belongs to the complex I subunit 4L family. In terms of assembly, NDH-1 is composed of 14 different subunits. Subunits NuoA, H, J, K, L, M, N constitute the membrane sector of the complex.

The protein resides in the cell membrane. It catalyses the reaction a quinone + NADH + 5 H(+)(in) = a quinol + NAD(+) + 4 H(+)(out). Functionally, NDH-1 shuttles electrons from NADH, via FMN and iron-sulfur (Fe-S) centers, to quinones in the respiratory chain. The immediate electron acceptor for the enzyme in this species is believed to be a menaquinone. Couples the redox reaction to proton translocation (for every two electrons transferred, four hydrogen ions are translocated across the cytoplasmic membrane), and thus conserves the redox energy in a proton gradient. This chain is NADH-quinone oxidoreductase subunit K, found in Salinispora tropica (strain ATCC BAA-916 / DSM 44818 / JCM 13857 / NBRC 105044 / CNB-440).